We begin with the raw amino-acid sequence, 515 residues long: Alpha-1B adrenergic receptor (515 aa).

Over 1-45 the chain is Extracellular; the sequence is MNPDLDTGHNTSAPAHWGELKDDNFTGPNQTSSNSTLPQLDVTRA. 3 N-linked (GlcNAc...) asparagine glycosylation sites follow: asparagine 10, asparagine 24, and asparagine 34. The chain crosses the membrane as a helical span at residues 46 to 70; it reads ISVGLVLGAFILFAIVGNILVILSV. Residues 71-83 are Cytoplasmic-facing; it reads ACNRHLRTPTNYF. A helical transmembrane segment spans residues 84–105; the sequence is IVNLAIADLLLSFTVLPFSATL. Topologically, residues 106-115 are extracellular; the sequence is EVLGYWVLGR. Residues 116-141 form a helical membrane-spanning segment; sequence IFCDIWAAVDVLCCTASILSLCAISI. Residues cysteine 118 and cysteine 195 are joined by a disulfide bond. The Cytoplasmic portion of the chain corresponds to 142 to 161; sequence DRYIGVRYSLQYPTLVTRRK. A helical transmembrane segment spans residues 162-182; it reads AILALLSVWVLSTVISIGPLL. Topologically, residues 183–201 are extracellular; sequence GWKEPAPNDDKECGVTEEP. The helical transmembrane segment at 202–224 threads the bilayer; the sequence is FYALFSSLGSFYIPLAVILVMYC. Residues 225 to 295 lie on the Cytoplasmic side of the membrane; it reads RVYIVAKRTT…FSREKKAAKT (71 aa). Threonine 264 carries the post-translational modification Phosphothreonine. The chain crosses the membrane as a helical span at residues 296–319; sequence LGIVVGMFILCWLPFFIALPLGSL. The Extracellular segment spans residues 320–326; that stretch reads FSTLKPP. A helical transmembrane segment spans residues 327–351; it reads DAVFKVVFWLGYFNSCLNPIIYPCS. The Cytoplasmic segment spans residues 352-515; it reads SKEFKRAFMR…SNMPLAPGHF (164 aa). Cysteine 365 carries S-palmitoyl cysteine lipidation. The short motif at 368–378 is the Nuclear localization signal element; the sequence is RGGRRRRRRRR. 2 disordered regions span residues 392–430 and 474–515; these read GGSL…GYLG and LGDP…PGHF. 2 stretches are compositionally biased toward polar residues: residues 410-424 and 484-498; these read SCMS…SASP and GDTS…TDLA.

It belongs to the G-protein coupled receptor 1 family. Adrenergic receptor subfamily. ADRA1B sub-subfamily. Homo- and heterooligomer. Heterooligomerizes with ADRA1B homooligomers in cardiac myocytes. Interacts with CAVIN4.

It is found in the nucleus membrane. Its subcellular location is the cell membrane. The protein localises to the cytoplasm. The protein resides in the membrane. It localises to the caveola. Functionally, this alpha-adrenergic receptor mediates its action by association with G proteins that activate a phosphatidylinositol-calcium second messenger system. Its effect is mediated by G(q) and G(11) proteins. Nuclear ADRA1A-ADRA1B heterooligomers regulate phenylephrine (PE)-stimulated ERK signaling in cardiac myocytes. The chain is Alpha-1B adrenergic receptor (Adra1b) from Rattus norvegicus (Rat).